A 131-amino-acid polypeptide reads, in one-letter code: Flagellar assembly factor FliW (131 aa).

It belongs to the FliW family. Interacts with translational regulator CsrA and flagellin(s).

It localises to the cytoplasm. Acts as an anti-CsrA protein, binds CsrA and prevents it from repressing translation of its target genes, one of which is flagellin. Binds to flagellin and participates in the assembly of the flagellum. The sequence is that of Flagellar assembly factor FliW from Campylobacter lari (strain RM2100 / D67 / ATCC BAA-1060).